Consider the following 435-residue polypeptide: Methylenetetrahydrofolate--tRNA-(uracil-5-)-methyltransferase TrmFO (435 aa).

10–15 (GAGLAG) is a binding site for FAD.

It belongs to the MnmG family. TrmFO subfamily. FAD is required as a cofactor.

The protein resides in the cytoplasm. It carries out the reaction uridine(54) in tRNA + (6R)-5,10-methylene-5,6,7,8-tetrahydrofolate + NADH + H(+) = 5-methyluridine(54) in tRNA + (6S)-5,6,7,8-tetrahydrofolate + NAD(+). The catalysed reaction is uridine(54) in tRNA + (6R)-5,10-methylene-5,6,7,8-tetrahydrofolate + NADPH + H(+) = 5-methyluridine(54) in tRNA + (6S)-5,6,7,8-tetrahydrofolate + NADP(+). In terms of biological role, catalyzes the folate-dependent formation of 5-methyl-uridine at position 54 (M-5-U54) in all tRNAs. The polypeptide is Methylenetetrahydrofolate--tRNA-(uracil-5-)-methyltransferase TrmFO (Bacillus velezensis (strain DSM 23117 / BGSC 10A6 / LMG 26770 / FZB42) (Bacillus amyloliquefaciens subsp. plantarum)).